A 1024-amino-acid chain; its full sequence is Beta-galactosidase (1024 aa).

2 residues coordinate substrate: Asn103 and Asp202. Na(+) is bound at residue Asp202. Residues Glu417, His419, and Glu462 each coordinate Mg(2+). Substrate contacts are provided by residues Glu462 and 538-541 (EYAH). Glu462 acts as the Proton donor in catalysis. The active-site Nucleophile is Glu538. Asn598 lines the Mg(2+) pocket. Na(+) contacts are provided by Phe602 and Asn605. Substrate is bound by residues Asn605 and Trp1000.

Belongs to the glycosyl hydrolase 2 family. In terms of assembly, homotetramer. It depends on Mg(2+) as a cofactor. The cofactor is Na(+).

It catalyses the reaction Hydrolysis of terminal non-reducing beta-D-galactose residues in beta-D-galactosides.. This Escherichia coli O1:K1 / APEC protein is Beta-galactosidase.